The sequence spans 193 residues: Ion-translocating oxidoreductase complex subunit B (193 aa).

The interval 1–23 (MTFLFIVITLLALIFGAILGFAS) is hydrophobic. One can recognise a 4Fe-4S domain in the interval 29–87 (EADPVVEKIDAILPQSQCGQCGYPGCKPYAEAICNGDEITKCIPGGQTTIVKIAEILGV). Cys46, Cys49, Cys54, Cys70, Cys110, Cys113, Cys116, Cys120, Cys140, Cys143, Cys146, and Cys150 together coordinate [4Fe-4S] cluster. 2 consecutive 4Fe-4S ferredoxin-type domains span residues 101-130 (KVAF…GTNK) and 131-160 (AMHT…MIPV).

The protein belongs to the 4Fe4S bacterial-type ferredoxin family. RnfB subfamily. In terms of assembly, the complex is composed of six subunits: RnfA, RnfB, RnfC, RnfD, RnfE and RnfG. [4Fe-4S] cluster is required as a cofactor.

Its subcellular location is the cell inner membrane. Part of a membrane-bound complex that couples electron transfer with translocation of ions across the membrane. This Haemophilus influenzae (strain 86-028NP) protein is Ion-translocating oxidoreductase complex subunit B.